The sequence spans 470 residues: Nuclear receptor ROR-beta (470 aa).

The segment at residues 18-93 (VIPCKICGDK…LGMSRDAVKF (76 aa)) is a DNA-binding region (nuclear receptor). NR C4-type zinc fingers lie at residues 21–41 (CKIC…CEGC) and 57–81 (CPRQ…LQKC). Basic and acidic residues predominate over residues 104–117 (LYAEVQKHQQRLQE). A disordered region spans residues 104–127 (LYAEVQKHQQRLQEQRQQQSGEAE). In terms of domain architecture, NR LBD spans 222 to 460 (EIDRIAQNII…TLFPPLYKEL (239 aa)). An AF-2 motif is present at residues 456–461 (LYKELF).

This sequence belongs to the nuclear hormone receptor family. NR1 subfamily. As to quaternary structure, monomer. Interacts with CRX. In terms of tissue distribution, expressed in inner and outer neuroblastic layer as well as in the ganglion cell layer of the developing retina. Expressed in bone marrow osteoprogenitor cells.

It localises to the nucleus. It is found in the nucleoplasm. Nuclear receptor that binds DNA as a monomer to ROR response elements (RORE) containing a single core motif half-site 5'-AGGTCA-3' preceded by a short A-T-rich sequence. Considered to have intrinsic transcriptional activity, have some natural ligands such as all-trans retinoic acid (ATRA) and other retinoids which act as inverse agonists repressing the transcriptional activity. Required for normal postnatal development of rod and cone photoreceptor cells. Modulates rod photoreceptors differentiation at least by inducing the transcription factor NRL-mediated pathway. In cone photoreceptor cells, regulates transcription of OPN1SW. Involved in the regulation of the period length and stability of the circadian rhythm. May control cytoarchitectural patterning of neocortical neurons during development. May act in a dose-dependent manner to regulate barrel formation upon innervation of layer IV neurons by thalamocortical axons. May play a role in the suppression of osteoblastic differentiation through the inhibition of RUNX2 transcriptional activity. Functionally, isoform 1 is critical for hindlimb motor control and for the differentiation of amacrine and horizontal cells in the retina. Regulates the expression of PTF1A synergistically with FOXN4. In Mus musculus (Mouse), this protein is Nuclear receptor ROR-beta (Rorb).